The primary structure comprises 433 residues: 3-phosphoshikimate 1-carboxyvinyltransferase (433 aa).

3 residues coordinate 3-phosphoshikimate: Lys-23, Ser-24, and Arg-28. A phosphoenolpyruvate-binding site is contributed by Lys-23. Residues Gly-95 and Arg-123 each contribute to the phosphoenolpyruvate site. Positions 170, 171, 172, 198, 317, and 344 each coordinate 3-phosphoshikimate. Gln-172 serves as a coordination point for phosphoenolpyruvate. Asp-317 acts as the Proton acceptor in catalysis. Arg-348, Arg-391, and Lys-416 together coordinate phosphoenolpyruvate.

This sequence belongs to the EPSP synthase family. Monomer.

It localises to the cytoplasm. It catalyses the reaction 3-phosphoshikimate + phosphoenolpyruvate = 5-O-(1-carboxyvinyl)-3-phosphoshikimate + phosphate. It participates in metabolic intermediate biosynthesis; chorismate biosynthesis; chorismate from D-erythrose 4-phosphate and phosphoenolpyruvate: step 6/7. Functionally, catalyzes the transfer of the enolpyruvyl moiety of phosphoenolpyruvate (PEP) to the 5-hydroxyl of shikimate-3-phosphate (S3P) to produce enolpyruvyl shikimate-3-phosphate and inorganic phosphate. This Neisseria meningitidis serogroup C / serotype 2a (strain ATCC 700532 / DSM 15464 / FAM18) protein is 3-phosphoshikimate 1-carboxyvinyltransferase.